We begin with the raw amino-acid sequence, 335 residues long: Large ribosomal subunit protein uL10 (335 aa).

Residues 306–335 are disordered; that stretch reads VEETVEEEEEEEEEEDAEEEAAAGLGALFG. Acidic residues predominate over residues 308 to 326; the sequence is ETVEEEEEEEEEEDAEEEA.

Belongs to the universal ribosomal protein uL10 family. Part of the 50S ribosomal subunit. Forms part of the ribosomal stalk which helps the ribosome interact with GTP-bound translation factors. Forms a heptameric L10(L12)2(L12)2(L12)2 complex, where L10 forms an elongated spine to which the L12 dimers bind in a sequential fashion.

Its function is as follows. Forms part of the ribosomal stalk, playing a central role in the interaction of the ribosome with GTP-bound translation factors. This is Large ribosomal subunit protein uL10 from Methanobrevibacter smithii (strain ATCC 35061 / DSM 861 / OCM 144 / PS).